A 357-amino-acid polypeptide reads, in one-letter code: Phenylalanine--tRNA ligase alpha subunit (357 aa).

E257 contacts Mg(2+).

Belongs to the class-II aminoacyl-tRNA synthetase family. Phe-tRNA synthetase alpha subunit type 1 subfamily. As to quaternary structure, tetramer of two alpha and two beta subunits. Mg(2+) serves as cofactor.

The protein localises to the cytoplasm. It carries out the reaction tRNA(Phe) + L-phenylalanine + ATP = L-phenylalanyl-tRNA(Phe) + AMP + diphosphate + H(+). The chain is Phenylalanine--tRNA ligase alpha subunit from Ruegeria pomeroyi (strain ATCC 700808 / DSM 15171 / DSS-3) (Silicibacter pomeroyi).